Reading from the N-terminus, the 300-residue chain is Telomere repeat-binding factor 1 (300 aa).

The HTH myb-type domain occupies 1–58 (MGAPKQKWTQEEESALKSGVIKHGPGKWRTILKDPEFSGVLYLRSNVDLKDKWRNMSV). Positions 28-57 (WRTILKDPEFSGVLYLRSNVDLKDKWRNMS) form a DNA-binding region, H-T-H motif. Disordered regions lie at residues 93 to 119 (LQSD…RPNV) and 185 to 213 (NSTP…PSPK). Positions 117-185 (PNVRLDSLIM…KVKRKYRIPN (69 aa)) constitute an H15 domain. The stretch at 241–290 (EAAAVAAQAVAEAEAAMAEAEEAAKEAEAAEAEAEAAQAFAEEASKTLKG) forms a coiled coil.

It belongs to the histone H1/H5 family. SMH subfamily. In terms of assembly, forms a homodimer and heterodimers with TRB2 or TRB3. Interacts with POT1b, TRB2 and TRB3 through its H15 domain.

The protein resides in the nucleus. It localises to the nucleolus. The protein localises to the chromosome. Its function is as follows. Binds preferentially double-stranded telomeric repeats. This chain is Telomere repeat-binding factor 1 (TRB1), found in Arabidopsis thaliana (Mouse-ear cress).